A 144-amino-acid chain; its full sequence is Transcriptional regulator MraZ (144 aa).

SpoVT-AbrB domains follow at residues 5–47 (TYTP…PRAE) and 77–120 (TDEQ…DAQA).

It belongs to the MraZ family. As to quaternary structure, forms oligomers.

The protein resides in the cytoplasm. The protein localises to the nucleoid. This is Transcriptional regulator MraZ from Mycolicibacterium gilvum (strain PYR-GCK) (Mycobacterium gilvum (strain PYR-GCK)).